A 418-amino-acid polypeptide reads, in one-letter code: CinA-like protein (418 aa).

It belongs to the CinA family.

This Leptospira borgpetersenii serovar Hardjo-bovis (strain L550) protein is CinA-like protein.